Here is a 428-residue protein sequence, read N- to C-terminus: Histidine--tRNA ligase (428 aa).

It belongs to the class-II aminoacyl-tRNA synthetase family. As to quaternary structure, homodimer.

The protein resides in the cytoplasm. It catalyses the reaction tRNA(His) + L-histidine + ATP = L-histidyl-tRNA(His) + AMP + diphosphate + H(+). In Bordetella avium (strain 197N), this protein is Histidine--tRNA ligase.